Here is a 478-residue protein sequence, read N- to C-terminus: Proline--tRNA ligase (478 aa).

Belongs to the class-II aminoacyl-tRNA synthetase family. ProS type 3 subfamily. Homodimer.

Its subcellular location is the cytoplasm. The enzyme catalyses tRNA(Pro) + L-proline + ATP = L-prolyl-tRNA(Pro) + AMP + diphosphate. Catalyzes the attachment of proline to tRNA(Pro) in a two-step reaction: proline is first activated by ATP to form Pro-AMP and then transferred to the acceptor end of tRNA(Pro). In Clostridium botulinum (strain 657 / Type Ba4), this protein is Proline--tRNA ligase.